The sequence spans 397 residues: Cytochrome b (397 aa).

4 helical membrane passes run 48–68 (FGSMLGLCLVIQLLSGLLLSA), 92–113 (WMLRNIHANGSSMFFICIYAHI), 128–148 (WYFGVHLFLLTMAEAFLGYTL), and 193–213 (FYTLHFLLPFVMVAVVFLHLF). The heme b site is built by His-98 and His-112. The heme b site is built by His-197 and His-211. A ubiquinone is bound at residue His-216. The next 4 helical transmembrane spans lie at 241 to 261 (IKDLFGYVCFSFFFMYLVCVD), 303 to 323 (AGGVYVMFLSIVVLYLIPTLH), 335 to 355 (LNQVVFWVLVGSFISLTWIGA), and 362 to 382 (YIILGSAFQLFISLVYCWTPF).

The protein belongs to the cytochrome b family. In terms of assembly, the main subunits of complex b-c1 are: cytochrome b, cytochrome c1 and the Rieske protein. It depends on heme b as a cofactor.

It localises to the mitochondrion inner membrane. In terms of biological role, component of the ubiquinol-cytochrome c reductase complex (complex III or cytochrome b-c1 complex) that is part of the mitochondrial respiratory chain. The b-c1 complex mediates electron transfer from ubiquinol to cytochrome c. Contributes to the generation of a proton gradient across the mitochondrial membrane that is then used for ATP synthesis. The chain is Cytochrome b (MT-CYB) from Mytilus edulis (Blue mussel).